The following is a 137-amino-acid chain: Small ribosomal subunit protein uS12 (137 aa).

Asp89 is subject to 3-methylthioaspartic acid. The segment at 104 to 137 (TAGVNGRKQSRSKYGAKRPKPGQAAAAPAKGKKK) is disordered. A compositionally biased stretch (basic residues) spans 111-123 (KQSRSKYGAKRPK). Over residues 124–137 (PGQAAAAPAKGKKK) the composition is skewed to low complexity.

Belongs to the universal ribosomal protein uS12 family. In terms of assembly, part of the 30S ribosomal subunit. Contacts proteins S8 and S17. May interact with IF1 in the 30S initiation complex.

Functionally, with S4 and S5 plays an important role in translational accuracy. Its function is as follows. Interacts with and stabilizes bases of the 16S rRNA that are involved in tRNA selection in the A site and with the mRNA backbone. Located at the interface of the 30S and 50S subunits, it traverses the body of the 30S subunit contacting proteins on the other side and probably holding the rRNA structure together. The combined cluster of proteins S8, S12 and S17 appears to hold together the shoulder and platform of the 30S subunit. This is Small ribosomal subunit protein uS12 from Cytophaga hutchinsonii (strain ATCC 33406 / DSM 1761 / CIP 103989 / NBRC 15051 / NCIMB 9469 / D465).